A 148-amino-acid chain; its full sequence is Lysozyme C (148 aa).

The signal sequence occupies residues 1–18 (MKALIILGLVLLSVTVQG). One can recognise a C-type lysozyme domain in the interval 19 to 148 (KIFERCELAR…VSQYVEGCGV (130 aa)). 4 disulfide bridges follow: C24-C146, C48-C134, C83-C99, and C95-C113. Residues E53 and D71 contribute to the active site.

Belongs to the glycosyl hydrolase 22 family. Monomer.

It catalyses the reaction Hydrolysis of (1-&gt;4)-beta-linkages between N-acetylmuramic acid and N-acetyl-D-glucosamine residues in a peptidoglycan and between N-acetyl-D-glucosamine residues in chitodextrins.. Lysozymes have primarily a bacteriolytic function; those in tissues and body fluids are associated with the monocyte-macrophage system and enhance the activity of immunoagents. This Colobus angolensis (Angolan colobus) protein is Lysozyme C (LYZ).